Reading from the N-terminus, the 30-residue chain is Cyclotide hyen-D (30 aa).

Residues 1-30 (GFPCGESCVYIPCFTAAIGCSCKSKVCYKN) constitute a cross-link (cyclopeptide (Gly-Asn)). Disulfide bonds link Cys4–Cys20, Cys8–Cys22, and Cys13–Cys27.

In terms of processing, this is a cyclic peptide. Detected in stems (at protein level).

Its function is as follows. Probably participates in a plant defense mechanism. Has strong cytotoxic activity against HUVEC cells (LC(50)= 0.58 uM) and various cancer cells including HeLa (LC(50)= 0.48 uM), MCF-7 and K562. Also displays some hemolytic activity. Binds to and induces leakage in phospholipd membranes, particularly ones containing 1-palmitoyl-2-oleophosphatidylethanolamine (POPE). This Pigea enneasperma (Spade flower) protein is Cyclotide hyen-D.